The primary structure comprises 246 residues: Cold-regulated protein 27 (246 aa).

Disordered stretches follow at residues 1–39 and 151–232; these read MVGDYRGRFSSRRFSDDSDDSSDDASSVEGETTSSMYSA and EPEN…VVPL. Residues 168 to 180 are compositionally biased toward low complexity; it reads SSGSASSLKQLSS.

It is found in the nucleus. Its function is as follows. Together with COR28, involved in central circadian clock regulation and in flowering promotion, by binding to the chromatin of clock-associated evening genes TOC1, PRR5, ELF4 and cold-responsive genes in order to repress their transcription. Negative regulator of freezing tolerance. The chain is Cold-regulated protein 27 from Arabidopsis thaliana (Mouse-ear cress).